A 156-amino-acid polypeptide reads, in one-letter code: Deoxyuridine 5'-triphosphate nucleotidohydrolase (156 aa).

Substrate contacts are provided by residues 74 to 76 (RSG), Asn-87, 91 to 93 (TID), and Lys-101.

It belongs to the dUTPase family. It depends on Mg(2+) as a cofactor.

It carries out the reaction dUTP + H2O = dUMP + diphosphate + H(+). It functions in the pathway pyrimidine metabolism; dUMP biosynthesis; dUMP from dCTP (dUTP route): step 2/2. In terms of biological role, this enzyme is involved in nucleotide metabolism: it produces dUMP, the immediate precursor of thymidine nucleotides and it decreases the intracellular concentration of dUTP so that uracil cannot be incorporated into DNA. This is Deoxyuridine 5'-triphosphate nucleotidohydrolase from Wolbachia sp. subsp. Brugia malayi (strain TRS).